We begin with the raw amino-acid sequence, 584 residues long: Aspartate--tRNA(Asp/Asn) ligase (584 aa).

Residue Glu173 coordinates L-aspartate. Residues 197 to 200 (QLFK) are aspartate. Arg219 is an L-aspartate binding site. Residues 219–221 (RDE) and Gln228 each bind ATP. His446 contributes to the L-aspartate binding site. Glu476 is an ATP binding site. Arg483 is an L-aspartate binding site. 528–531 (GLDR) lines the ATP pocket.

It belongs to the class-II aminoacyl-tRNA synthetase family. Type 1 subfamily. Homodimer.

It localises to the cytoplasm. The enzyme catalyses tRNA(Asx) + L-aspartate + ATP = L-aspartyl-tRNA(Asx) + AMP + diphosphate. Aspartyl-tRNA synthetase with relaxed tRNA specificity since it is able to aspartylate not only its cognate tRNA(Asp) but also tRNA(Asn). Reaction proceeds in two steps: L-aspartate is first activated by ATP to form Asp-AMP and then transferred to the acceptor end of tRNA(Asp/Asn). The chain is Aspartate--tRNA(Asp/Asn) ligase from Sulfurovum sp. (strain NBC37-1).